The primary structure comprises 472 residues: Ribulose bisphosphate carboxylase large chain 1 (472 aa).

2 residues coordinate substrate: Asn115 and Thr165. Lys167 (proton acceptor) is an active-site residue. Lys169 is a substrate binding site. Lys193, Asp195, and Glu196 together coordinate Mg(2+). Lys193 is modified (N6-carboxylysine). His286 serves as the catalytic Proton acceptor. Residues Arg287, His319, and Ser371 each coordinate substrate.

The protein belongs to the RuBisCO large chain family. Type I subfamily. As to quaternary structure, heterohexadecamer of 8 large chains and 8 small chains. The cofactor is Mg(2+).

The catalysed reaction is 2 (2R)-3-phosphoglycerate + 2 H(+) = D-ribulose 1,5-bisphosphate + CO2 + H2O. The enzyme catalyses D-ribulose 1,5-bisphosphate + O2 = 2-phosphoglycolate + (2R)-3-phosphoglycerate + 2 H(+). In terms of biological role, ruBisCO catalyzes two reactions: the carboxylation of D-ribulose 1,5-bisphosphate, the primary event in carbon dioxide fixation, as well as the oxidative fragmentation of the pentose substrate. Both reactions occur simultaneously and in competition at the same active site. This chain is Ribulose bisphosphate carboxylase large chain 1, found in Rhodopseudomonas palustris (strain BisB5).